The following is a 320-amino-acid chain: Probable L-ascorbate peroxidase 5, chloroplastic (320 aa).

Residues 1-42 constitute a chloroplast transit peptide; it reads MAVVHRILRRGLSAASPLPSLRGLLLVSPQELGRRPASSSSS. H80 (proton acceptor) is an active-site residue. H209 provides a ligand contact to heme b. T210 serves as a coordination point for K(+). Residues 213-241 form a disordered region; the sequence is RARPERSGWGKPETKYTENGPGAPGGQSW. Positions 214–228 are enriched in basic and acidic residues; sequence ARPERSGWGKPETKY. K(+)-binding residues include T242 and D249.

The protein belongs to the peroxidase family. Ascorbate peroxidase subfamily. Requires heme b as cofactor. As to expression, expressed in leaves, stems and flowers.

It is found in the plastid. The protein localises to the chloroplast stroma. The enzyme catalyses L-ascorbate + H2O2 = L-dehydroascorbate + 2 H2O. Plays a key role in hydrogen peroxide removal. The polypeptide is Probable L-ascorbate peroxidase 5, chloroplastic (Oryza sativa subsp. japonica (Rice)).